A 71-amino-acid chain; its full sequence is Protein CYSTEINE-RICH TRANSMEMBRANE MODULE 8 (71 aa).

A compositionally biased stretch (polar residues) spans 1 to 22 (MNQSAQNYFSVQKPSETSSGPY). A disordered region spans residues 1 to 35 (MNQSAQNYFSVQKPSETSSGPYTSPPPIGYPTRDA). A helical membrane pass occupies residues 48–64 (NSKGVNPEGCCAAICCC).

This sequence belongs to the CYSTM1 family. As to expression, mostly expressed in stems, siliques, roots and flowers and, to a lower extent, in leaves.

The protein resides in the membrane. Its subcellular location is the nucleus. Involved in resistance to abiotic stress. This Arabidopsis thaliana (Mouse-ear cress) protein is Protein CYSTEINE-RICH TRANSMEMBRANE MODULE 8.